Reading from the N-terminus, the 28-residue chain is Potassium channel toxin kappa-KTx 2.9 (28 aa).

Cystine bridges form between Cys4–Cys22 and Cys8–Cys18.

It belongs to the short scorpion toxin superfamily. Potassium channel inhibitor family. Gamma-KTx 2 subfamily. In terms of processing, contains 2 disulfide bonds. Expressed by the venom gland.

The protein localises to the secreted. Its function is as follows. Reversibly blocks voltage-gated potassium channels Kv1.2/KCNA2 and Kv1.3/KCNA3. This is Potassium channel toxin kappa-KTx 2.9 from Pandinus imperator (Emperor scorpion).